A 115-amino-acid polypeptide reads, in one-letter code: Large ribosomal subunit protein bL20 (115 aa).

This sequence belongs to the bacterial ribosomal protein bL20 family.

Binds directly to 23S ribosomal RNA and is necessary for the in vitro assembly process of the 50S ribosomal subunit. It is not involved in the protein synthesizing functions of that subunit. This is Large ribosomal subunit protein bL20 from Prochlorococcus marinus (strain MIT 9515).